A 125-amino-acid polypeptide reads, in one-letter code: Fluoride-specific ion channel FluC (125 aa).

4 consecutive transmembrane segments (helical) span residues 1–21, 32–52, 68–88, and 101–121; these read MIQA…RYYV, AFPW…GVFA, LLIT…LDAI, and IYIA…LAVM. Gly75 and Thr78 together coordinate Na(+).

The protein belongs to the fluoride channel Fluc/FEX (TC 1.A.43) family.

Its subcellular location is the cell inner membrane. The catalysed reaction is fluoride(in) = fluoride(out). With respect to regulation, na(+) is not transported, but it plays an essential structural role and its presence is essential for fluoride channel function. In terms of biological role, fluoride-specific ion channel. Important for reducing fluoride concentration in the cell, thus reducing its toxicity. In Rhizobium etli (strain CIAT 652), this protein is Fluoride-specific ion channel FluC.